A 194-amino-acid polypeptide reads, in one-letter code: Peptidyl-tRNA hydrolase (194 aa).

Tyr-16 contributes to the tRNA binding site. The active-site Proton acceptor is His-21. The tRNA site is built by Phe-67, Asn-69, and Asn-115.

The protein belongs to the PTH family. In terms of assembly, monomer.

The protein resides in the cytoplasm. The catalysed reaction is an N-acyl-L-alpha-aminoacyl-tRNA + H2O = an N-acyl-L-amino acid + a tRNA + H(+). Its function is as follows. Hydrolyzes ribosome-free peptidyl-tRNAs (with 1 or more amino acids incorporated), which drop off the ribosome during protein synthesis, or as a result of ribosome stalling. Functionally, catalyzes the release of premature peptidyl moieties from peptidyl-tRNA molecules trapped in stalled 50S ribosomal subunits, and thus maintains levels of free tRNAs and 50S ribosomes. This is Peptidyl-tRNA hydrolase from Shigella boydii serotype 18 (strain CDC 3083-94 / BS512).